The following is a 182-amino-acid chain: Thymidine kinase (182 aa).

Position 8-15 (8-15 (GPMFSGKT)) interacts with ATP. Catalysis depends on Glu85, which acts as the Proton acceptor. Phe117 serves as a coordination point for substrate. Positions 142 and 145 each coordinate Zn(2+). Substrate is bound at residue 161-165 (IIEIG). 2 residues coordinate Zn(2+): Cys174 and Cys177.

It belongs to the thymidine kinase family.

It catalyses the reaction thymidine + ATP = dTMP + ADP + H(+). This is Thymidine kinase (TK) from Amsacta moorei entomopoxvirus (AmEPV).